The following is a 137-amino-acid chain: Small ribosomal subunit protein uS12 (137 aa).

Disordered regions lie at residues 1 to 21 (MPTI…KSDS) and 34 to 57 (VHTK…TPKK). Asp102 is modified (3-methylthioaspartic acid).

It belongs to the universal ribosomal protein uS12 family. Part of the 30S ribosomal subunit. Contacts proteins S8 and S17. May interact with IF1 in the 30S initiation complex.

Its function is as follows. With S4 and S5 plays an important role in translational accuracy. Interacts with and stabilizes bases of the 16S rRNA that are involved in tRNA selection in the A site and with the mRNA backbone. Located at the interface of the 30S and 50S subunits, it traverses the body of the 30S subunit contacting proteins on the other side and probably holding the rRNA structure together. The combined cluster of proteins S8, S12 and S17 appears to hold together the shoulder and platform of the 30S subunit. In Streptococcus equi subsp. zooepidemicus (strain H70), this protein is Small ribosomal subunit protein uS12.